The following is a 265-amino-acid chain: Glutamate racemase (265 aa).

Substrate is bound by residues 9–10 and 41–42; these read DS and YS. The active-site Proton donor/acceptor is the C73. 74–75 serves as a coordination point for substrate; it reads NT. The active-site Proton donor/acceptor is the C184. 185-186 contributes to the substrate binding site; the sequence is TH.

This sequence belongs to the aspartate/glutamate racemases family.

The catalysed reaction is L-glutamate = D-glutamate. It functions in the pathway cell wall biogenesis; peptidoglycan biosynthesis. Functionally, provides the (R)-glutamate required for cell wall biosynthesis. The sequence is that of Glutamate racemase from Haemophilus ducreyi (strain 35000HP / ATCC 700724).